A 446-amino-acid polypeptide reads, in one-letter code: N-succinylarginine dihydrolase (446 aa).

Residues 19-28, N110, and 137-138 each bind substrate; these read AGLSFGNVAS and HR. E174 is a catalytic residue. R213 provides a ligand contact to substrate. The active site involves H249. The substrate site is built by D251 and N364. C370 functions as the Nucleophile in the catalytic mechanism.

This sequence belongs to the succinylarginine dihydrolase family. As to quaternary structure, homodimer.

The enzyme catalyses N(2)-succinyl-L-arginine + 2 H2O + 2 H(+) = N(2)-succinyl-L-ornithine + 2 NH4(+) + CO2. It participates in amino-acid degradation; L-arginine degradation via AST pathway; L-glutamate and succinate from L-arginine: step 2/5. In terms of biological role, catalyzes the hydrolysis of N(2)-succinylarginine into N(2)-succinylornithine, ammonia and CO(2). The polypeptide is N-succinylarginine dihydrolase (Burkholderia lata (strain ATCC 17760 / DSM 23089 / LMG 22485 / NCIMB 9086 / R18194 / 383)).